Reading from the N-terminus, the 515-residue chain is Maturase K (515 aa).

This sequence belongs to the intron maturase 2 family. MatK subfamily.

It localises to the plastid. Its subcellular location is the chloroplast. Functionally, usually encoded in the trnK tRNA gene intron. Probably assists in splicing its own and other chloroplast group II introns. The sequence is that of Maturase K from Trillium pusillum (Dwarf wakerobin).